Here is a 144-residue protein sequence, read N- to C-terminus: IgW chain C region, secreted form 1/3 (144 aa).

The 82-residue stretch at 1–82 (VYNQTTAVLG…AGSRFNDRIS (82 aa)) folds into the Ig-like domain. 3 N-linked (GlcNAc...) asparagine glycosylation sites follow: Asn3, Asn43, and Asn123. Cys11 and Cys68 are joined by a disulfide. The interval 87 to 144 (KGGTINLPVPGGNTPCTCPPCSCSGCMPKLVYQTDLNVTLENGGQLQYNCHQQACKIK) is secretory tail.

In terms of tissue distribution, expressed mainly in lymphoid tissues including spleen, epigonal organ and circulating lymphocytes.

The protein localises to the secreted. The protein is IgW chain C region, secreted form 1/3 of Heterodontus francisci (Horn shark).